Here is a 226-residue protein sequence, read N- to C-terminus: Tyramine N-feruloyltransferase 10/30 (226 aa).

The important in binding site and for catalytic activity stretch occupies residues 29–45 (HIYKLFYQIHEYHNYTH). The 151-residue stretch at 72 to 222 (VLLLEVSPTP…VGDALQKYAD (151 aa)) folds into the N-acetyltransferase domain.

This sequence belongs to the acetyltransferase family. In terms of assembly, homodimer.

It is found in the cytoplasm. The catalysed reaction is tyramine + (E)-feruloyl-CoA = N-[(E)-feruloyl]tyramine + CoA + H(+). Its activity is regulated as follows. Inhibited by (2-hydroxyphenyl)amino sulfinyl acetic acid 1,1-dimethylethyl ester, by DEPC and by N-ethylmaleimide. Functionally, synthesizes amides which are involved in stress response in the cell wall. Catalyzes the synthesis of hydroxycinnamic acid amides from hydroxycinnamoyl-CoA thioesters and various hydroxyphenylethylamines such as 4-coumaroyl-CoA and sinapoyl-CoA. The chain is Tyramine N-feruloyltransferase 10/30 (THT10) from Nicotiana tabacum (Common tobacco).